The sequence spans 251 residues: CDP-diacylglycerol pyrophosphatase (251 aa).

The chain crosses the membrane as a helical span at residues 5 to 25 (GYFLLAVIVIVAAAGVGYWKF).

The protein belongs to the Cdh family.

It is found in the cell inner membrane. It carries out the reaction a CDP-1,2-diacyl-sn-glycerol + H2O = a 1,2-diacyl-sn-glycero-3-phosphate + CMP + 2 H(+). Its pathway is phospholipid metabolism; CDP-diacylglycerol degradation; phosphatidate from CDP-diacylglycerol: step 1/1. This is CDP-diacylglycerol pyrophosphatase from Salmonella typhi.